The primary structure comprises 351 residues: Ribosomal RNA small subunit methyltransferase H (351 aa).

S-adenosyl-L-methionine contacts are provided by residues 48–50 (GGY), Asp-67, Phe-94, Asp-115, and Gln-122. Residues 298–351 (GPVLPSEAETEVNPRARSAKLRAGERTDGPAPPPLSAIETLASLPAPQGRGTRR) are disordered.

It belongs to the methyltransferase superfamily. RsmH family.

It localises to the cytoplasm. The catalysed reaction is cytidine(1402) in 16S rRNA + S-adenosyl-L-methionine = N(4)-methylcytidine(1402) in 16S rRNA + S-adenosyl-L-homocysteine + H(+). Functionally, specifically methylates the N4 position of cytidine in position 1402 (C1402) of 16S rRNA. The protein is Ribosomal RNA small subunit methyltransferase H of Methylorubrum populi (strain ATCC BAA-705 / NCIMB 13946 / BJ001) (Methylobacterium populi).